Reading from the N-terminus, the 407-residue chain is MDNVLPVDSDLFPNTSTNTSESNQFVQPTWQIVLWAAAYTVIVVTSVVGNVVVIWIILAHKRMRTVTNYFLVNLAFAEACMAAFNTVVNFTYAVHNVWYYGLFYCKFHNFFPIAALFASIYSMTAVAFDRYMAIIHPLQPRLSATATKVVIFVIWVLALLLAFPQGYYSTTETMPSRVVCMIEWPEHPNRTYEKAYHICVTVLIYFLPLLVIGYAYTVVGITLWASEIPGDSSDRYHEQVSAKRKVVKMMIVVVCTFAICWLPFHIFFLLPYINPDLYLKKFIQQVYLASMWLAMSSTMYNPIIYCCLNDRFRLGFKHAFRCCPFISAGDYEGLEMKSTRYLQTQSSVYKVSRLETTISTVVGAHEDEPEEGPKATPSSLDLTSNGSSRSNSKTMTESSSFYSNMLA.

The segment at 1-20 (MDNVLPVDSDLFPNTSTNTS) is disordered. Topologically, residues 1-31 (MDNVLPVDSDLFPNTSTNTSESNQFVQPTWQ) are extracellular. 2 N-linked (GlcNAc...) asparagine glycosylation sites follow: asparagine 14 and asparagine 18. A helical membrane pass occupies residues 32-54 (IVLWAAAYTVIVVTSVVGNVVVI). The Cytoplasmic portion of the chain corresponds to 55–64 (WIILAHKRMR). The helical transmembrane segment at 65–86 (TVTNYFLVNLAFAEACMAAFNT) threads the bilayer. Residues 87–106 (VVNFTYAVHNVWYYGLFYCK) are Extracellular-facing. The cysteines at positions 105 and 180 are disulfide-linked. A helical membrane pass occupies residues 107 to 128 (FHNFFPIAALFASIYSMTAVAF). At 129–148 (DRYMAIIHPLQPRLSATATK) the chain is on the cytoplasmic side. A helical membrane pass occupies residues 149-169 (VVIFVIWVLALLLAFPQGYYS). The Extracellular segment spans residues 170 to 194 (TTETMPSRVVCMIEWPEHPNRTYEK). The helical transmembrane segment at 195 to 219 (AYHICVTVLIYFLPLLVIGYAYTVV) threads the bilayer. Topologically, residues 220 to 248 (GITLWASEIPGDSSDRYHEQVSAKRKVVK) are cytoplasmic. The helical transmembrane segment at 249-270 (MMIVVVCTFAICWLPFHIFFLL) threads the bilayer. The Extracellular segment spans residues 271-283 (PYINPDLYLKKFI). The helical transmembrane segment at 284–308 (QQVYLASMWLAMSSTMYNPIIYCCL) threads the bilayer. At 309–407 (NDRFRLGFKH…SSSFYSNMLA (99 aa)) the chain is on the cytoplasmic side. Residue cysteine 322 is the site of S-palmitoyl cysteine attachment. The segment at 362 to 407 (VGAHEDEPEEGPKATPSSLDLTSNGSSRSNSKTMTESSSFYSNMLA) is disordered. A compositionally biased stretch (polar residues) spans 376–407 (TPSSLDLTSNGSSRSNSKTMTESSSFYSNMLA).

This sequence belongs to the G-protein coupled receptor 1 family. Interacts with ARRB1.

It is found in the cell membrane. Its function is as follows. This is a receptor for the tachykinin neuropeptide substance P. It is probably associated with G proteins that activate a phosphatidylinositol-calcium second messenger system. The rank order of affinity of this receptor to tachykinins is: substance P &gt; substance K &gt; neuromedin K. This chain is Substance-P receptor (Tacr1), found in Mus musculus (Mouse).